Consider the following 402-residue polypeptide: MRCPILLADMNSFYASVHQAMEPRLKGKPVIVGGDPARRHGIVLAASVEAKACGVKTGMTVREAAALCPQGIFLKPRHSHYINFSARIIRIMKDFSPLVEPFSIDEAFMDVSGCGLLFGSSLEIAVKLKARIKNEVGVLCSVGVGPNKLLAKMAAGMQKPDGLTLLDFPDVPVKIWPLPVRELFGVGSRLEKRLRDLNIHTIGDLARYPLQVLKQKFGLVGHILHLSASGIDYSPVDPCSLERVRSIGHQITLPRDYWGYNEIKVVILELCEIVCRRVRLGGYAGRTVSLTLKDTDFLWLSRARTMNYPTASADEVYRVAVQLLHQHWPPWKPVRMVGVSLAGLVKNRAEQLDLFGEAERARRLHAACDRIKDRFGEHSILRAVSLTPAGVLRERGGEAKHG.

Residues 5–187 form the UmuC domain; it reads ILLADMNSFY…LPVRELFGVG (183 aa). Residues Asp9 and Asp105 each contribute to the Mg(2+) site. The active site involves Glu106.

The protein belongs to the DNA polymerase type-Y family. In terms of assembly, monomer. It depends on Mg(2+) as a cofactor.

Its subcellular location is the cytoplasm. It carries out the reaction DNA(n) + a 2'-deoxyribonucleoside 5'-triphosphate = DNA(n+1) + diphosphate. Its function is as follows. Poorly processive, error-prone DNA polymerase involved in untargeted mutagenesis. Copies undamaged DNA at stalled replication forks, which arise in vivo from mismatched or misaligned primer ends. These misaligned primers can be extended by PolIV. Exhibits no 3'-5' exonuclease (proofreading) activity. May be involved in translesional synthesis, in conjunction with the beta clamp from PolIII. The protein is DNA polymerase IV of Pelotomaculum thermopropionicum (strain DSM 13744 / JCM 10971 / SI).